The sequence spans 163 residues: HTH-type transcriptional regulator IscR (163 aa).

The 130-residue stretch at 2–131 (RLTSKGRYAV…NNITLGELVN (130 aa)) folds into the HTH rrf2-type domain. A DNA-binding region (H-T-H motif) is located at residues 28 to 51 (LADISERQGISLSYLEQLFSRLRK). 3 residues coordinate [2Fe-2S] cluster: cysteine 92, cysteine 98, and cysteine 104.

[2Fe-2S] cluster serves as cofactor.

Functionally, regulates the transcription of several operons and genes involved in the biogenesis of Fe-S clusters and Fe-S-containing proteins. This is HTH-type transcriptional regulator IscR from Enterobacter sp. (strain 638).